The sequence spans 283 residues: DegV domain-containing protein lin2658 (283 aa).

One can recognise a DegV domain in the interval 5–282 (IAVVTDSTTY…EGALGLTWSI (278 aa)). 2 residues coordinate hexadecanoate: Ser-63 and Ser-96.

In terms of biological role, may bind long-chain fatty acids, such as palmitate, and may play a role in lipid transport or fatty acid metabolism. This Listeria innocua serovar 6a (strain ATCC BAA-680 / CLIP 11262) protein is DegV domain-containing protein lin2658.